Consider the following 280-residue polypeptide: Mastin (280 aa).

The N-terminal stretch at 1–15 (MLWLLVLTAPWLGGS) is a signal peptide. Positions 16 to 30 (VPISPDPGLRHEQVG) are excised as a propeptide. A Peptidase S1 domain is found at 31 to 275 (IVGGCKVPAR…YVSWIHQHIP (245 aa)). Cys62 and Cys78 form a disulfide bridge. The active-site Charge relay system is the His77. Residues Asn106 and Asn117 are each glycosylated (N-linked (GlcNAc...) asparagine). The Charge relay system role is filled by Asp127. Intrachain disulfides connect Cys161–Cys234, Cys194–Cys215, and Cys224–Cys252. The active-site Charge relay system is Ser228.

It belongs to the peptidase S1 family. In terms of assembly, oligomer; disulfide-linked. N-glycosylated. As to expression, mononuclear cells within skin, intestine, trachea and lung parenchyma, and polymorphonuclear leukocytes within capillaries and blood.

It localises to the cytoplasm. With respect to regulation, inhibited by leupeptin and bis(5-amidino-2-benzimidazolyl)methane (BABIM). Trypsin-like serine protease. Has a preference for extended substrates with basic residues at the P1 position; Arg is preferred over Lys. Active towards calcitonin gene-related peptide and gelatin. Not active towards substance P, vasoactive intestinal peptide, type I collagen or azocasein. This is Mastin from Canis lupus familiaris (Dog).